Here is a 136-residue protein sequence, read N- to C-terminus: Small ribosomal subunit protein uS8 (136 aa).

Belongs to the universal ribosomal protein uS8 family. In terms of assembly, part of the 30S ribosomal subunit. Contacts proteins S5 and S12.

One of the primary rRNA binding proteins, it binds directly to 16S rRNA central domain where it helps coordinate assembly of the platform of the 30S subunit. In Persephonella marina (strain DSM 14350 / EX-H1), this protein is Small ribosomal subunit protein uS8.